The chain runs to 309 residues: HPr kinase/phosphorylase (309 aa).

Active-site residues include histidine 138 and lysine 159. An ATP-binding site is contributed by 153–160 (GASGIGKS). Serine 160 is a Mg(2+) binding site. Aspartate 177 (proton acceptor; for phosphorylation activity. Proton donor; for dephosphorylation activity) is an active-site residue. An important for the catalytic mechanism of both phosphorylation and dephosphorylation region spans residues 201–210 (IEIRGVGIID). Glutamate 202 provides a ligand contact to Mg(2+). Arginine 243 is an active-site residue. Residues 264-269 (PVKTGR) are important for the catalytic mechanism of dephosphorylation.

The protein belongs to the HPrK/P family. In terms of assembly, homohexamer. Mg(2+) serves as cofactor.

It catalyses the reaction [HPr protein]-L-serine + ATP = [HPr protein]-O-phospho-L-serine + ADP + H(+). The enzyme catalyses [HPr protein]-O-phospho-L-serine + phosphate + H(+) = [HPr protein]-L-serine + diphosphate. In terms of biological role, catalyzes the ATP- as well as the pyrophosphate-dependent phosphorylation of a specific serine residue in HPr, a phosphocarrier protein of the phosphoenolpyruvate-dependent sugar phosphotransferase system (PTS). HprK/P also catalyzes the pyrophosphate-producing, inorganic phosphate-dependent dephosphorylation (phosphorolysis) of seryl-phosphorylated HPr (P-Ser-HPr). The two antagonistic activities of HprK/P are regulated by several intracellular metabolites, which change their concentration in response to the absence or presence of rapidly metabolisable carbon sources (glucose, fructose, etc.) in the growth medium. Therefore, by controlling the phosphorylation state of HPr, HPrK/P is a sensor enzyme that plays a major role in the regulation of carbon metabolism and sugar transport: it mediates carbon catabolite repression (CCR), and regulates PTS-catalyzed carbohydrate uptake and inducer exclusion. The sequence is that of HPr kinase/phosphorylase from Lactococcus lactis subsp. lactis (strain IL1403) (Streptococcus lactis).